The primary structure comprises 919 residues: Transcriptional regulatory protein EDS1 (919 aa).

The segment at 1–54 (MSHHVPNLYGTPIRDPHERKRNSASMGEVNQSVSSRNCERGSEKGTKQRKKASR) is disordered. The segment covering 23-36 (SASMGEVNQSVSSR) has biased composition (polar residues). A compositionally biased stretch (basic and acidic residues) spans 37 to 46 (NCERGSEKGT). Residues 56-85 (CDQCRRKRIKCRFDKHTGVCQGCLEVGEKC) constitute a DNA-binding region (zn(2)-C6 fungal-type). Residues 297–338 (AGCPNKKLGTDGRSDKWDKNSTWKPVYRSSNPSHPSTEKNVS) are disordered. Residues 304–317 (LGTDGRSDKWDKNS) are compositionally biased toward basic and acidic residues. Positions 318-338 (TWKPVYRSSNPSHPSTEKNVS) are enriched in polar residues.

In terms of assembly, binds DNA in a sequence-specific manner.

It is found in the nucleus. This Saccharomyces cerevisiae (strain RM11-1a) (Baker's yeast) protein is Transcriptional regulatory protein EDS1 (EDS1).